We begin with the raw amino-acid sequence, 280 residues long: Shikimate dehydrogenase (NADP(+)) (280 aa).

Residues 20-22 (TLS) and Thr-67 each bind shikimate. Catalysis depends on Lys-71, which acts as the Proton acceptor. The shikimate site is built by Asn-92 and Asp-107. NADP(+)-binding positions include 131–135 (GAGGA), 154–159 (NRTIDK), and Leu-224. Tyr-226 contacts shikimate. Gly-247 provides a ligand contact to NADP(+).

This sequence belongs to the shikimate dehydrogenase family. As to quaternary structure, homodimer.

It catalyses the reaction shikimate + NADP(+) = 3-dehydroshikimate + NADPH + H(+). It functions in the pathway metabolic intermediate biosynthesis; chorismate biosynthesis; chorismate from D-erythrose 4-phosphate and phosphoenolpyruvate: step 4/7. Involved in the biosynthesis of the chorismate, which leads to the biosynthesis of aromatic amino acids. Catalyzes the reversible NADPH linked reduction of 3-dehydroshikimate (DHSA) to yield shikimate (SA). The chain is Shikimate dehydrogenase (NADP(+)) from Carboxydothermus hydrogenoformans (strain ATCC BAA-161 / DSM 6008 / Z-2901).